Reading from the N-terminus, the 108-residue chain is Putative lipid-binding protein AIR1B (108 aa).

Positions 1-23 (MAPRTSLALFVSLNLLFFTCTSA) are cleaved as a signal peptide. 3 disulfide bridges follow: Cys28/Cys55, Cys35/Cys54, and Cys71/Cys107.

It belongs to the plant LTP family. PEARLI1 subfamily.

Its subcellular location is the secreted. The sequence is that of Putative lipid-binding protein AIR1B (AIR1B) from Arabidopsis thaliana (Mouse-ear cress).